The chain runs to 199 residues: dITP/XTP pyrophosphatase (199 aa).

8–13 (TRNKGK) contacts substrate. Glu-41 and Asp-70 together coordinate Mg(2+). Asp-70 serves as the catalytic Proton acceptor. Substrate contacts are provided by residues Ser-71, 153 to 156 (FGYD), Lys-176, and 181 to 182 (HR).

The protein belongs to the HAM1 NTPase family. Homodimer. Mg(2+) serves as cofactor.

The catalysed reaction is XTP + H2O = XMP + diphosphate + H(+). It catalyses the reaction dITP + H2O = dIMP + diphosphate + H(+). It carries out the reaction ITP + H2O = IMP + diphosphate + H(+). In terms of biological role, pyrophosphatase that catalyzes the hydrolysis of nucleoside triphosphates to their monophosphate derivatives, with a high preference for the non-canonical purine nucleotides XTP (xanthosine triphosphate), dITP (deoxyinosine triphosphate) and ITP. Seems to function as a house-cleaning enzyme that removes non-canonical purine nucleotides from the nucleotide pool, thus preventing their incorporation into DNA/RNA and avoiding chromosomal lesions. This chain is dITP/XTP pyrophosphatase, found in Geobacter sulfurreducens (strain ATCC 51573 / DSM 12127 / PCA).